A 337-amino-acid chain; its full sequence is NADH-quinone oxidoreductase subunit H (337 aa).

The next 8 helical transmembrane spans lie at 9–29 (FAKI…FTYV), 77–97 (FLIA…VIPF), 110–130 (LLYI…AGWA), 154–174 (MGFA…SGIV), 181–201 (FWEW…ISGV), 229–249 (MAFA…SFLA), 274–294 (VPGI…YLWF), and 313–333 (VLIP…YGGV).

The protein belongs to the complex I subunit 1 family. In terms of assembly, NDH-1 is composed of 14 different subunits. Subunits NuoA, H, J, K, L, M, N constitute the membrane sector of the complex.

Its subcellular location is the cell inner membrane. The catalysed reaction is a quinone + NADH + 5 H(+)(in) = a quinol + NAD(+) + 4 H(+)(out). NDH-1 shuttles electrons from NADH, via FMN and iron-sulfur (Fe-S) centers, to quinones in the respiratory chain. The immediate electron acceptor for the enzyme in this species is believed to be ubiquinone. Couples the redox reaction to proton translocation (for every two electrons transferred, four hydrogen ions are translocated across the cytoplasmic membrane), and thus conserves the redox energy in a proton gradient. This subunit may bind ubiquinone. This chain is NADH-quinone oxidoreductase subunit H, found in Halorhodospira halophila (strain DSM 244 / SL1) (Ectothiorhodospira halophila (strain DSM 244 / SL1)).